The chain runs to 229 residues: MGKNYAESAKLIDKSTLYSSEEAMNLVVKTSKANFDETIDLAVRLGVDPRHADQQVRGAIILPHGTGKKVKVLVFAKGEKAKEAEAAGADFVGAEELVEKIQKENWFDYDVVVATPDMMGVVGRLGRVLGPKGLMPNPKSGTVTFDVAKALNDIKAGKVEYRVDKTAIIHVVIGKKSFGPEKLKDNFRVLMDAIIKAKPSAAKGQYLKSVSVSSTMGPGVKINPSKVLD.

Belongs to the universal ribosomal protein uL1 family. In terms of assembly, part of the 50S ribosomal subunit.

Functionally, binds directly to 23S rRNA. The L1 stalk is quite mobile in the ribosome, and is involved in E site tRNA release. Its function is as follows. Protein L1 is also a translational repressor protein, it controls the translation of the L11 operon by binding to its mRNA. This Clostridium tetani (strain Massachusetts / E88) protein is Large ribosomal subunit protein uL1.